A 176-amino-acid chain; its full sequence is ATP-dependent protease subunit HslV (176 aa).

Thr2 is a catalytic residue. The Na(+) site is built by Gly157, Cys160, and Thr163.

It belongs to the peptidase T1B family. HslV subfamily. As to quaternary structure, a double ring-shaped homohexamer of HslV is capped on each side by a ring-shaped HslU homohexamer. The assembly of the HslU/HslV complex is dependent on binding of ATP.

The protein localises to the cytoplasm. The enzyme catalyses ATP-dependent cleavage of peptide bonds with broad specificity.. Its activity is regulated as follows. Allosterically activated by HslU binding. Functionally, protease subunit of a proteasome-like degradation complex believed to be a general protein degrading machinery. This is ATP-dependent protease subunit HslV from Pseudomonas savastanoi pv. phaseolicola (strain 1448A / Race 6) (Pseudomonas syringae pv. phaseolicola (strain 1448A / Race 6)).